A 320-amino-acid chain; its full sequence is Peptidase 1 (320 aa).

Positions 1–18 (MKIVLAIASLLALSAVYA) are cleaved as a signal peptide. The propeptide at 19–98 (RPSSIKTFEE…LKTQFDLNAE (80 aa)) is activation peptide. Disulfide bonds link cysteine 102–cysteine 215, cysteine 129–cysteine 169, and cysteine 163–cysteine 201. The active site involves cysteine 132. An N-linked (GlcNAc...) asparagine glycan is attached at asparagine 150. Residues histidine 268 and asparagine 288 contribute to the active site.

This sequence belongs to the peptidase C1 family. In terms of processing, N-glycosylated. N-glycanase treatment does not completely remove carbohydrates, suggesting that the protein contains additional glycosylation sites.

The protein localises to the secreted. It catalyses the reaction Broad endopeptidase specificity.. Thiol protease, with a preference for substrates with a large hydrophobic side chain in the P2 position, or with basic residues. This is Peptidase 1 (DERP1) from Dermatophagoides pteronyssinus (European house dust mite).